Consider the following 360-residue polypeptide: Plastid lipid-associated protein 3, chloroplastic (360 aa).

Residues 1–37 (MATLFTVTTTSRPFPANPSKTFSPSISLKPNALSFSL) are compositionally biased toward polar residues. A chloroplast-targeting transit peptide spans 1–52 (MATLFTVTTTSRPFPANPSKTFSPSISLKPNALSFSLTHHRPPRPLRFSKIR). A disordered region spans residues 1 to 130 (MATLFTVTTT…EWEEREADDG (130 aa)). A compositionally biased stretch (basic residues) spans 38–50 (THHRPPRPLRFSK). Residues 53-68 (SSLPSESDSEPEGGYS) show a composition bias toward low complexity. Over residues 117–127 (TNEDEWEEREA) the composition is skewed to acidic residues.

Belongs to the PAP/fibrillin family. In terms of tissue distribution, ubiquitous expression among various organs, but only at a very low level.

It is found in the plastid. It localises to the chloroplast. The protein is Plastid lipid-associated protein 3, chloroplastic (PAP3) of Brassica campestris (Field mustard).